The chain runs to 901 residues: Alpha-actinin-3 (901 aa).

Methionine 1 is subject to N-acetylmethionine. An actin-binding region spans residues 1 to 261; the sequence is MMMVLQPEGL…IMTYVSCFYH (261 aa). Calponin-homology (CH) domains lie at 45-149 and 158-264; these read KQQR…LRFA and TSAK…HAFA. Spectrin repeat units lie at residues 288-398, 408-513, 523-634, and 644-747; these read KLME…WLLS, HLAE…ALER, QLQL…MLQE, and RLRR…EVEN. 2 EF-hand domains span residues 760-795 and 796-831; these read EQLN…MGYD and LGEV…ETAE. The Ca(2+) site is built by aspartate 773, asparagine 777, methionine 779, aspartate 784, aspartate 809, and asparagine 811.

This sequence belongs to the alpha-actinin family. Homodimer; antiparallel. Also forms heterodimers with ACTN2. Interacts with MYOZ1.

In terms of biological role, F-actin cross-linking protein which is thought to anchor actin to a variety of intracellular structures. This is a bundling protein. This chain is Alpha-actinin-3 (ACTN3), found in Bos taurus (Bovine).